A 547-amino-acid polypeptide reads, in one-letter code: uncharacterized protein (547 aa).

A disordered region spans residues 1–37 (MSAASSAIPKRSDPRLLDQKKSAKSTLPKNTPENGVS). Basic and acidic residues predominate over residues 10–21 (KRSDPRLLDQKK). Positions 24–37 (KSTLPKNTPENGVS) are enriched in polar residues. 2 consecutive C3H1-type zinc fingers follow at residues 41 to 67 (NLQH…SHSL) and 68 to 95 (ETER…HALP). The tract at residues 132 to 176 (SPSLSSKTMKNPADKANNTTATDVRGNTATSPYFPFSRSPGRHSG) is disordered. The segment covering 147-162 (ANNTTATDVRGNTATS) has biased composition (polar residues). Residue Ser-343 is modified to Phosphoserine. The residue at position 344 (Tyr-344) is a Phosphotyrosine. 6 positions are modified to phosphoserine: Ser-353, Ser-355, Ser-483, Ser-489, Ser-495, and Ser-499. Thr-502 is modified (phosphothreonine). Over residues 526-536 (VANSSPPWNST) the composition is skewed to polar residues. The tract at residues 526–547 (VANSSPPWNSTVEEETPFQMDD) is disordered. Positions 537 to 547 (VEEETPFQMDD) are enriched in acidic residues.

This is an uncharacterized protein from Schizosaccharomyces pombe (strain 972 / ATCC 24843) (Fission yeast).